Consider the following 201-residue polypeptide: Recombination protein RecR (201 aa).

The C4-type zinc-finger motif lies at 59–74; that stretch reads CSRCQNFCEAELCSIC. The region spanning 82 to 177 is the Toprim domain; the sequence is RVLCVVESPT…PVSRIAHGIP (96 aa).

This sequence belongs to the RecR family.

Functionally, may play a role in DNA repair. It seems to be involved in an RecBC-independent recombinational process of DNA repair. It may act with RecF and RecO. This Hahella chejuensis (strain KCTC 2396) protein is Recombination protein RecR.